Reading from the N-terminus, the 154-residue chain is MRIIGIDPGLARVGYGIIDEIEGKKIMIDCGIIETKSTQKEEERLVEISNDLSSIIKKWNPNSAAVEKFFFYRSSTTISVVQARGVIMMTLGKYKLPIQEFPPMQIKLAVTGYGHSDKNDVLNSVMHELNVTSPPKPDDAADALAIALTGIYLK.

Residues aspartate 7, glutamate 67, and aspartate 139 contribute to the active site. Mg(2+) is bound by residues aspartate 7, glutamate 67, and aspartate 139.

Belongs to the RuvC family. As to quaternary structure, homodimer which binds Holliday junction (HJ) DNA. The HJ becomes 2-fold symmetrical on binding to RuvC with unstacked arms; it has a different conformation from HJ DNA in complex with RuvA. In the full resolvosome a probable DNA-RuvA(4)-RuvB(12)-RuvC(2) complex forms which resolves the HJ. It depends on Mg(2+) as a cofactor.

Its subcellular location is the cytoplasm. It carries out the reaction Endonucleolytic cleavage at a junction such as a reciprocal single-stranded crossover between two homologous DNA duplexes (Holliday junction).. Its function is as follows. The RuvA-RuvB-RuvC complex processes Holliday junction (HJ) DNA during genetic recombination and DNA repair. Endonuclease that resolves HJ intermediates. Cleaves cruciform DNA by making single-stranded nicks across the HJ at symmetrical positions within the homologous arms, yielding a 5'-phosphate and a 3'-hydroxyl group; requires a central core of homology in the junction. The consensus cleavage sequence is 5'-(A/T)TT(C/G)-3'. Cleavage occurs on the 3'-side of the TT dinucleotide at the point of strand exchange. HJ branch migration catalyzed by RuvA-RuvB allows RuvC to scan DNA until it finds its consensus sequence, where it cleaves and resolves the cruciform DNA. The protein is Crossover junction endodeoxyribonuclease RuvC of Prochlorococcus marinus (strain NATL2A).